The following is a 445-amino-acid chain: ATP-dependent RNA helicase DBP8 (445 aa).

Residues 1-29 (MSFEDLGVSRWLSEALAAMKIHTPTAIQS) carry the Q motif motif. The region spanning 32-208 (IPKILSGHDC…EKPPAQGKPP (177 aa)) is the Helicase ATP-binding domain. Residue 45–52 (AKTGSGKT) participates in ATP binding. A DEAD box motif is present at residues 154 to 157 (DEAD). In terms of domain architecture, Helicase C-terminal spans 247-387 (RLPQYEKSTA…LLEEVTDDSV (141 aa)). The segment at 408–445 (KENFGEKRKINRKKRGLETEKIRVVKSKKEKSKKSLRQ) is disordered. Basic residues predominate over residues 431–445 (VVKSKKEKSKKSLRQ).

It belongs to the DEAD box helicase family. DDX49/DBP8 subfamily.

The protein resides in the nucleus. It is found in the nucleolus. It catalyses the reaction ATP + H2O = ADP + phosphate + H(+). In terms of biological role, ATP-binding RNA helicase involved in 40S ribosomal subunit biogenesis and is required for the normal formation of 18S rRNAs through pre-rRNA processing at A0, A1 and A2 sites. Required for vegetative growth. In Scheffersomyces stipitis (strain ATCC 58785 / CBS 6054 / NBRC 10063 / NRRL Y-11545) (Yeast), this protein is ATP-dependent RNA helicase DBP8 (DBP8).